Reading from the N-terminus, the 225-residue chain is MADS-box transcription factor 5 (225 aa).

One can recognise an MADS-box domain in the interval 1–61 (MGRGKVELKR…GRLFEFSTSS (61 aa)). A K-box domain is found at 89–179 (ELSNYQEYLK…KRKIQETSGE (91 aa)).

May interact with the K-box of MADS6.

It localises to the nucleus. Functionally, probable transcription factor. The chain is MADS-box transcription factor 5 (MADS5) from Oryza sativa subsp. indica (Rice).